The following is a 98-amino-acid chain: NADH-ubiquinone oxidoreductase chain 4L (98 aa).

The next 3 membrane-spanning stretches (helical) occupy residues 1–21 (MSIT…GLLL), 29–49 (SLLC…MIIL), and 61–81 (IILL…LVMV).

It belongs to the complex I subunit 4L family. As to quaternary structure, core subunit of respiratory chain NADH dehydrogenase (Complex I) which is composed of 45 different subunits.

Its subcellular location is the mitochondrion inner membrane. The enzyme catalyses a ubiquinone + NADH + 5 H(+)(in) = a ubiquinol + NAD(+) + 4 H(+)(out). Functionally, core subunit of the mitochondrial membrane respiratory chain NADH dehydrogenase (Complex I) which catalyzes electron transfer from NADH through the respiratory chain, using ubiquinone as an electron acceptor. Part of the enzyme membrane arm which is embedded in the lipid bilayer and involved in proton translocation. This chain is NADH-ubiquinone oxidoreductase chain 4L (MT-ND4L), found in Platyrrhinus dorsalis (Thomas's broad-nosed bat).